The primary structure comprises 1059 residues: RNA-binding protein 26 (1059 aa).

Composition is skewed to basic and acidic residues over residues 98–114 (EKEI…EKEK) and 130–147 (RHKD…DRES). The interval 98 to 275 (EKEIKKDEVN…PVDNSYASGS (178 aa)) is disordered. Over residues 172 to 182 (LNSNKVQNAKN) the composition is skewed to polar residues. The segment covering 184–213 (RSRDDRKRDDRFRKREYDRNVPRRDSYRDR) has biased composition (basic and acidic residues). Over residues 214–231 (YNRRRGRSRSYSRSRSRS) the composition is skewed to basic residues. The span at 232-266 (WSKERQRDRDRSRSRTRSRDKDSGKPKFDLDRPDP) shows a compositional bias: basic and acidic residues. Residues 327 to 355 (QMQKKRCRDYDEKGFCMRGDMCPFDHGSD) form a C3H1-type zinc finger. Pro residues predominate over residues 375 to 428 (PVLEGPPPPGLPPPPSLLTPPPVNLQPPPVPPPGPLPPSLPPVTGPPPPLPPLQ). A disordered region spans residues 375–443 (PVLEGPPPPG…APPNSATSSV (69 aa)). Low complexity predominate over residues 434 to 443 (APPNSATSSV). The region spanning 581 to 655 (TKLELRRIPP…RFIRMYWHRE (75 aa)) is the RRM 1 domain. The stretch at 771 to 873 (GDAQKKKQEA…LLDTELDLYN (103 aa)) forms a coiled coil. An RRM 2 domain is found at 942 to 1011 (RALKISGFTE…QDLKLAWNKP (70 aa)). A disordered region spans residues 1010 to 1059 (KPVPNASSTEVEDADQEEEEFHEDSIVDDSLLQDDDEEEEDDNESRSWRR). Acidic residues-rich tracts occupy residues 1019–1031 (EVED…EEFH) and 1040–1052 (LLQD…EDDN).

May be involved in the turnover of nuclear polyadenylated (pA+) RNA. The polypeptide is RNA-binding protein 26 (Xenopus laevis (African clawed frog)).